Reading from the N-terminus, the 145-residue chain is Transmembrane protein 216 (145 aa).

4 helical membrane passes run I22 to F42, L56 to F76, L89 to L109, and G122 to F142.

In terms of assembly, part of the tectonic-like complex (also named B9 complex). Interacts with TMEM107.

It localises to the membrane. The protein resides in the cytoplasm. The protein localises to the cytoskeleton. It is found in the cilium basal body. In terms of biological role, part of the tectonic-like complex which is required for tissue-specific ciliogenesis and may regulate ciliary membrane composition. This chain is Transmembrane protein 216 (TMEM216), found in Homo sapiens (Human).